Consider the following 380-residue polypeptide: uncharacterized protein (380 aa).

Residues 251 to 275 (NMSERPPTPSHDTASSSTSTDPNPL) are disordered. Low complexity predominate over residues 260-272 (SHDTASSSTSTDP).

This is an uncharacterized protein from Allium cepa var. aggregatum (Shallot).